The sequence spans 499 residues: MLKRDCCCGCKSAEFCTCKNKKSCIPNNLYEKIRNVFGYEVFEKLNNLRPYFDDLHSSTYIGKLDDVWVQIRIPSDSKINYDNETKLVEKFKDYFYYKDGYIIKKWFPGVDLFKVKIDSGIKKAIFNCVKNFQNLNVDKIEKFDWFKYPIQDAEYKALVKKYSKEPLVLSHNNLKRQNILVNKYGFIKLVDFEYVALNNKYVDPVSLYLFLGIPKEDIIDFFKLDPSVFDDFVFLMRVYNEAMYLNDYSKNNSKSLSPFDSKSLYSNKDFLELNRFIVQKNHNNFDNKLNISKIEKFYFVPLCVYEDEDRTIWKWINSKQLSSFNNHQIKVLAKAMRTLHDSDVEFPEYILSKKINWYLDHMEIKTLLEDLKGNKRINEIIKWIKQIKPDANCHNNLNFNNIFFNSSDNLYIIDWSVAYRNNRYLDIAFLFENTQMTPELESLFWKSYGMICPKDFYKYRIIVHFTAYLYNKLLNTDFNAAKVNTKRINEIFEKLNIKD.

This is an uncharacterized protein from Metamycoplasma hominis (strain ATCC 23114 / DSM 25592 / NBRC 14850 / NCTC 10111 / PG21) (Mycoplasma hominis).